We begin with the raw amino-acid sequence, 622 residues long: Probable potassium transport system protein Kup (622 aa).

The next 12 membrane-spanning stretches (helical) occupy residues 8–28, 50–70, 103–123, 137–157, 169–189, 215–235, 247–267, 285–305, 337–357, 366–386, 393–413, and 419–439; these read LAAL…TSVL, VLSI…VVLV, LGIG…TPAI, PHFG…LFAV, FGPV…PHIV, FIIL…YADL, WFSV…ALLL, ALIP…QALI, IYIP…VVMF, AYGI…FFVI, PLAL…AFFG, and LLQG…LMMT.

It belongs to the HAK/KUP transporter (TC 2.A.72) family.

It is found in the cell inner membrane. It carries out the reaction K(+)(in) + H(+)(in) = K(+)(out) + H(+)(out). Its function is as follows. Transport of potassium into the cell. Likely operates as a K(+):H(+) symporter. The protein is Probable potassium transport system protein Kup of Paracidovorax citrulli (strain AAC00-1) (Acidovorax citrulli).